The primary structure comprises 177 residues: Large ribosomal subunit protein uL6 (177 aa).

It belongs to the universal ribosomal protein uL6 family. As to quaternary structure, part of the 50S ribosomal subunit.

Functionally, this protein binds to the 23S rRNA, and is important in its secondary structure. It is located near the subunit interface in the base of the L7/L12 stalk, and near the tRNA binding site of the peptidyltransferase center. The polypeptide is Large ribosomal subunit protein uL6 (Rhodopseudomonas palustris (strain BisB18)).